A 640-amino-acid polypeptide reads, in one-letter code: 1-deoxy-D-xylulose-5-phosphate synthase (640 aa).

Thiamine diphosphate is bound by residues His-75 and 117–119; that span reads GHA. Residue Asp-146 participates in Mg(2+) binding. Thiamine diphosphate contacts are provided by residues 147-148, Asn-175, and Glu-370; that span reads AA. Asn-175 serves as a coordination point for Mg(2+).

Belongs to the transketolase family. DXPS subfamily. In terms of assembly, homodimer. Mg(2+) serves as cofactor. Requires thiamine diphosphate as cofactor.

It carries out the reaction D-glyceraldehyde 3-phosphate + pyruvate + H(+) = 1-deoxy-D-xylulose 5-phosphate + CO2. It participates in metabolic intermediate biosynthesis; 1-deoxy-D-xylulose 5-phosphate biosynthesis; 1-deoxy-D-xylulose 5-phosphate from D-glyceraldehyde 3-phosphate and pyruvate: step 1/1. Catalyzes the acyloin condensation reaction between C atoms 2 and 3 of pyruvate and glyceraldehyde 3-phosphate to yield 1-deoxy-D-xylulose-5-phosphate (DXP). This Chlamydia trachomatis serovar D (strain ATCC VR-885 / DSM 19411 / UW-3/Cx) protein is 1-deoxy-D-xylulose-5-phosphate synthase.